Consider the following 120-residue polypeptide: Large ribosomal subunit protein uL22 (120 aa).

Residues Met-1 to Arg-22 are disordered.

Belongs to the universal ribosomal protein uL22 family. In terms of assembly, part of the 50S ribosomal subunit.

This protein binds specifically to 23S rRNA; its binding is stimulated by other ribosomal proteins, e.g. L4, L17, and L20. It is important during the early stages of 50S assembly. It makes multiple contacts with different domains of the 23S rRNA in the assembled 50S subunit and ribosome. In terms of biological role, the globular domain of the protein is located near the polypeptide exit tunnel on the outside of the subunit, while an extended beta-hairpin is found that lines the wall of the exit tunnel in the center of the 70S ribosome. This Borreliella burgdorferi (strain ATCC 35210 / DSM 4680 / CIP 102532 / B31) (Borrelia burgdorferi) protein is Large ribosomal subunit protein uL22.